We begin with the raw amino-acid sequence, 985 residues long: Protein psiQ (985 aa).

The first 20 residues, 1–20 (MMKYIYILLIFSLLFLKINS), serve as a signal peptide directing secretion. One can recognise a PA14 domain in the interval 102–247 (QSTTNPNVYA…YDECGVCQGD (146 aa)). Asparagine 127, asparagine 309, asparagine 424, asparagine 491, asparagine 517, asparagine 527, asparagine 592, asparagine 620, asparagine 649, asparagine 696, asparagine 735, asparagine 767, asparagine 786, asparagine 824, and asparagine 842 each carry an N-linked (GlcNAc...) asparagine glycan.

The protein belongs to the prespore-cell-inducing factor family.

It localises to the secreted. In Dictyostelium discoideum (Social amoeba), this protein is Protein psiQ (psiQ).